We begin with the raw amino-acid sequence, 122 residues long: Large ribosomal subunit protein uL14 (122 aa).

It belongs to the universal ribosomal protein uL14 family. In terms of assembly, part of the 50S ribosomal subunit. Forms a cluster with proteins L3 and L19. In the 70S ribosome, L14 and L19 interact and together make contacts with the 16S rRNA in bridges B5 and B8.

Its function is as follows. Binds to 23S rRNA. Forms part of two intersubunit bridges in the 70S ribosome. The chain is Large ribosomal subunit protein uL14 from Nocardia farcinica (strain IFM 10152).